The primary structure comprises 89 residues: Microcin N (89 aa).

An N-terminal signal peptide occupies residues 1–15 (MRELDREELNCVGGA).

This sequence belongs to the class IIa microcin family. Post-translationally, mass spectrometry suggests 3 of the 4 Met residues of the mature peptide are oxidized.

It localises to the secreted. Functionally, active against E.coli and Salmonella, but not Listeria or Campylobacter. Channel-forming microcin. Probably neutralized by its immunity protein McnI. This Escherichia coli protein is Microcin N.